A 968-amino-acid chain; its full sequence is RNA polymerase-associated protein RapA (968 aa).

In terms of domain architecture, Helicase ATP-binding spans 163-332; it reads EVGRRYAPRV…FARLRLLDPD (170 aa). ATP is bound at residue 176–183; the sequence is DEVGLGKT. Positions 278–281 match the DEAH box motif; the sequence is DEAH. The region spanning 491–655 is the Helicase C-terminal domain; the sequence is RVDWLIEFLK…EFAEDLLNVL (165 aa).

This sequence belongs to the SNF2/RAD54 helicase family. RapA subfamily. As to quaternary structure, interacts with the RNAP. Has a higher affinity for the core RNAP than for the holoenzyme. Its ATPase activity is stimulated by binding to RNAP.

Functionally, transcription regulator that activates transcription by stimulating RNA polymerase (RNAP) recycling in case of stress conditions such as supercoiled DNA or high salt concentrations. Probably acts by releasing the RNAP, when it is trapped or immobilized on tightly supercoiled DNA. Does not activate transcription on linear DNA. Probably not involved in DNA repair. In Shewanella baltica (strain OS155 / ATCC BAA-1091), this protein is RNA polymerase-associated protein RapA.